The primary structure comprises 293 residues: Protein BOBBER 2 (293 aa).

A2 carries the N-acetylalanine modification. Positions 50–80 (EKEIVAAVMAAKQRLREAEKKKLEKESVKSM) form a coiled coil. Composition is skewed to basic and acidic residues over residues 67–102 (AEKK…KEES) and 110–120 (EIEKPKEEKES). A disordered region spans residues 67–125 (AEKKKLEKESVKSMEVEKPKKDSLKPTELEKPKEESLMATDPMEIEKPKEEKESGPIVP). The CS domain maps to 131-220 (LDFEKYSWGQ…DQMEWWKYCV (90 aa)).

It is found in the cytoplasm. The protein localises to the cytoplasmic granule. Small heat shock protein required for the establishment of auxin gradients and for patterning of the apical domain of the embryo. Involved in the specification of the cotyledon primordia. Also required for normal inflorescence and floral meristem function, normal developmental patterning and thermotolerance. Acts as a molecular chaperone. This is Protein BOBBER 2 (BOB2) from Arabidopsis thaliana (Mouse-ear cress).